Reading from the N-terminus, the 554-residue chain is Germacrene A synthase (554 aa).

Residues D306, D310, T453, and E457 each contribute to the Mg(2+) site. Residues 306 to 310 carry the DDXXD motif motif; it reads DDTYD.

The protein belongs to the terpene synthase family. Requires Mg(2+) as cofactor.

It localises to the cytoplasm. Its subcellular location is the cytosol. It carries out the reaction (2E,6E)-farnesyl diphosphate = (+)-(R)-germacrene A + diphosphate. The protein operates within secondary metabolite biosynthesis; terpenoid biosynthesis. Its function is as follows. Sesquiterpene synthase involved in germacrene A biosynthesis. Also produces additional sesquiterpene products, including 4,5-di-epi-aristolochene, eremophilene, alpha-selinene. This chain is Germacrene A synthase, found in Pogostemon cablin (Patchouli).